A 1397-amino-acid chain; its full sequence is DNA-directed RNA polymerase subunit beta' (1397 aa).

4 residues coordinate Zn(2+): Cys-75, Cys-77, Cys-90, and Cys-93. Mg(2+) is bound by residues Asp-465, Asp-467, and Asp-469. Residues Cys-819, Cys-893, Cys-900, and Cys-903 each coordinate Zn(2+).

The protein belongs to the RNA polymerase beta' chain family. In terms of assembly, the RNAP catalytic core consists of 2 alpha, 1 beta, 1 beta' and 1 omega subunit. When a sigma factor is associated with the core the holoenzyme is formed, which can initiate transcription. Mg(2+) is required as a cofactor. It depends on Zn(2+) as a cofactor.

The catalysed reaction is RNA(n) + a ribonucleoside 5'-triphosphate = RNA(n+1) + diphosphate. DNA-dependent RNA polymerase catalyzes the transcription of DNA into RNA using the four ribonucleoside triphosphates as substrates. The chain is DNA-directed RNA polymerase subunit beta' from Acinetobacter baumannii (strain ACICU).